The following is a 278-amino-acid chain: Glutamate racemase (278 aa).

Substrate contacts are provided by residues 25-26 (DS) and 57-58 (YG). Residue cysteine 89 is the Proton donor/acceptor of the active site. 90-91 (NT) lines the substrate pocket. The active-site Proton donor/acceptor is the cysteine 204. 205-206 (TH) is a binding site for substrate.

The protein belongs to the aspartate/glutamate racemases family.

It carries out the reaction L-glutamate = D-glutamate. The protein operates within cell wall biogenesis; peptidoglycan biosynthesis. In terms of biological role, provides the (R)-glutamate required for cell wall biosynthesis. The sequence is that of Glutamate racemase from Brucella anthropi (strain ATCC 49188 / DSM 6882 / CCUG 24695 / JCM 21032 / LMG 3331 / NBRC 15819 / NCTC 12168 / Alc 37) (Ochrobactrum anthropi).